The sequence spans 681 residues: Potassium-transporting ATPase ATP-binding subunit (681 aa).

The next 4 helical transmembrane spans lie at 30–50, 59–79, 216–236, and 255–275; these read LLVY…FFGI, LAIA…EAIA, ILLV…LPFT, and IALL…SIGI. Aspartate 306 functions as the 4-aspartylphosphate intermediate in the catalytic mechanism. Residues aspartate 343, glutamate 347, 376–383, and lysine 394 contribute to the ATP site; that span reads FTATTRMS. Mg(2+) is bound by residues aspartate 517 and aspartate 521. The next 3 membrane-spanning stretches (helical) occupy residues 587-607, 615-635, and 661-681; these read FAII…LNLM, AILS…PLSL, and LIAP…LGIV.

Belongs to the cation transport ATPase (P-type) (TC 3.A.3) family. Type IA subfamily. The system is composed of three essential subunits: KdpA, KdpB and KdpC.

Its subcellular location is the cell membrane. It carries out the reaction K(+)(out) + ATP + H2O = K(+)(in) + ADP + phosphate + H(+). Its function is as follows. Part of the high-affinity ATP-driven potassium transport (or Kdp) system, which catalyzes the hydrolysis of ATP coupled with the electrogenic transport of potassium into the cytoplasm. This subunit is responsible for energy coupling to the transport system and for the release of the potassium ions to the cytoplasm. This Listeria monocytogenes serotype 4a (strain HCC23) protein is Potassium-transporting ATPase ATP-binding subunit.